The sequence spans 334 residues: L-lactate dehydrogenase B chain (334 aa).

Alanine 2 carries the post-translational modification N-acetylalanine. Lysine 7 carries the post-translational modification N6-acetyllysine. At serine 44 the chain carries Phosphoserine. NAD(+)-binding positions include 53–58 (DVLEDK) and arginine 100. The residue at position 58 (lysine 58) is an N6-acetyllysine. Arginine 107 provides a ligand contact to substrate. Lysine 119 bears the N6-acetyllysine mark. Asparagine 139 is a binding site for NAD(+). Positions 139 and 170 each coordinate substrate. The Proton acceptor role is filled by histidine 194. Position 240 is a phosphotyrosine (tyrosine 240). Threonine 249 provides a ligand contact to substrate. The residue at position 329 (lysine 329) is an N6-acetyllysine.

Belongs to the LDH/MDH superfamily. LDH family. As to quaternary structure, homotetramer. Interacts with PTEN upstream reading frame protein MP31; the interaction leads to inhibition of mitochondrial lactate dehydrogenase activity, preventing conversion of lactate to pyruvate in mitochondria.

The protein resides in the cytoplasm. It localises to the mitochondrion inner membrane. It carries out the reaction (S)-lactate + NAD(+) = pyruvate + NADH + H(+). It functions in the pathway fermentation; pyruvate fermentation to lactate; (S)-lactate from pyruvate: step 1/1. In terms of biological role, interconverts simultaneously and stereospecifically pyruvate and lactate with concomitant interconversion of NADH and NAD(+). The sequence is that of L-lactate dehydrogenase B chain (LDHB) from Bos taurus (Bovine).